We begin with the raw amino-acid sequence, 824 residues long: Leucine--tRNA ligase (824 aa).

The short motif at 42 to 52 (PYPSGKIHMGH) is the 'HIGH' region element. A 'KMSKS' region motif is present at residues 581-585 (KMSKS). Lys-584 contributes to the ATP binding site.

Belongs to the class-I aminoacyl-tRNA synthetase family.

It is found in the cytoplasm. It catalyses the reaction tRNA(Leu) + L-leucine + ATP = L-leucyl-tRNA(Leu) + AMP + diphosphate. The polypeptide is Leucine--tRNA ligase (Geobacter sp. (strain M21)).